We begin with the raw amino-acid sequence, 355 residues long: Protein-glutamate methylesterase/protein-glutamine glutaminase 3 (355 aa).

The Response regulatory domain maps to 5–122; it reads KVLIVDDSAV…KQFLEESRVR (118 aa). At aspartate 56 the chain carries 4-aspartylphosphate. Positions 165 to 355 constitute a CheB-type methylesterase domain; that stretch reads IQTTEKVVVV…IAREVLRLCG (191 aa). Catalysis depends on residues serine 177, histidine 203, and aspartate 299.

The protein belongs to the CheB family. Phosphorylated by CheA. Phosphorylation of the N-terminal regulatory domain activates the methylesterase activity.

Its subcellular location is the cytoplasm. It catalyses the reaction [protein]-L-glutamate 5-O-methyl ester + H2O = L-glutamyl-[protein] + methanol + H(+). It carries out the reaction L-glutaminyl-[protein] + H2O = L-glutamyl-[protein] + NH4(+). Involved in chemotaxis. Part of a chemotaxis signal transduction system that modulates chemotaxis in response to various stimuli. Catalyzes the demethylation of specific methylglutamate residues introduced into the chemoreceptors (methyl-accepting chemotaxis proteins or MCP) by CheR. Also mediates the irreversible deamidation of specific glutamine residues to glutamic acid. This is Protein-glutamate methylesterase/protein-glutamine glutaminase 3 from Geobacter metallireducens (strain ATCC 53774 / DSM 7210 / GS-15).